An 890-amino-acid polypeptide reads, in one-letter code: Leucine--tRNA ligase (890 aa).

A 'HIGH' region motif is present at residues 48–58; that stretch reads PYPSGKLHMGH. Positions 645–649 match the 'KMSKS' region motif; it reads KMSKS. Lysine 648 serves as a coordination point for ATP.

This sequence belongs to the class-I aminoacyl-tRNA synthetase family.

It localises to the cytoplasm. It catalyses the reaction tRNA(Leu) + L-leucine + ATP = L-leucyl-tRNA(Leu) + AMP + diphosphate. The polypeptide is Leucine--tRNA ligase (Polynucleobacter asymbioticus (strain DSM 18221 / CIP 109841 / QLW-P1DMWA-1) (Polynucleobacter necessarius subsp. asymbioticus)).